Consider the following 186-residue polypeptide: Peptidyl-tRNA hydrolase (186 aa).

Y14 is a tRNA binding site. Residue H19 is the Proton acceptor of the active site. Y61, N63, and N107 together coordinate tRNA.

This sequence belongs to the PTH family. As to quaternary structure, monomer.

Its subcellular location is the cytoplasm. It catalyses the reaction an N-acyl-L-alpha-aminoacyl-tRNA + H2O = an N-acyl-L-amino acid + a tRNA + H(+). Its function is as follows. Hydrolyzes ribosome-free peptidyl-tRNAs (with 1 or more amino acids incorporated), which drop off the ribosome during protein synthesis, or as a result of ribosome stalling. Functionally, catalyzes the release of premature peptidyl moieties from peptidyl-tRNA molecules trapped in stalled 50S ribosomal subunits, and thus maintains levels of free tRNAs and 50S ribosomes. This is Peptidyl-tRNA hydrolase from Helicobacter pylori (strain Shi470).